A 432-amino-acid chain; its full sequence is Crenactin (432 aa).

ATP is bound by residues 20–24 (TSYVK), 182–184 (GGH), 235–239 (EVVKR), 354–358 (GAFSW), and Gln399.

It belongs to the actin family. Monomer. The crenactin monomers polymerize into right-handed helical filaments, with 8 subunits per complete turn of the helix. Forms single-stranded filaments under high salt concentrations and double-stranded filaments under low salt concentrations. Interacts with arcadin-1 and arcadin-2.

The protein resides in the cytoplasm. The protein localises to the cytoskeleton. It carries out the reaction ATP + H2O = ADP + phosphate + H(+). With respect to regulation, crenactin polymerization is inhibited by interaction with arcadin-2. Also significantly inhibited by elevated antibiotic A22 concentrations. Functionally, forms the backbone of an actin-like archaeal cytoskeleton, which is involved in cell shape determination. Has ATPase activity. Shows highest activity towards ATP or GTP as nucleotide, and only residual activity on UTP, CTP and dNTPs. This Pyrobaculum calidifontis (strain DSM 21063 / JCM 11548 / VA1) protein is Crenactin.